Here is a 638-residue protein sequence, read N- to C-terminus: tRNA uridine 5-carboxymethylaminomethyl modification enzyme MnmG (638 aa).

Residues 15–20, Ile127, and Ser182 each bind FAD; that span reads GAGHAG. 276–290 lines the NAD(+) pocket; it reads GPRYCPSIEDKIVRF. Gln373 lines the FAD pocket.

It belongs to the MnmG family. Homodimer. Heterotetramer of two MnmE and two MnmG subunits. FAD is required as a cofactor.

Its subcellular location is the cytoplasm. NAD-binding protein involved in the addition of a carboxymethylaminomethyl (cmnm) group at the wobble position (U34) of certain tRNAs, forming tRNA-cmnm(5)s(2)U34. This Streptococcus suis (strain 98HAH33) protein is tRNA uridine 5-carboxymethylaminomethyl modification enzyme MnmG.